A 381-amino-acid polypeptide reads, in one-letter code: 3-dehydroquinate synthase (381 aa).

NAD(+) contacts are provided by residues E81–K86, G115–D119, T139–S140, K152, and K161. E194, H256, and H274 together coordinate Zn(2+).

Belongs to the sugar phosphate cyclases superfamily. Dehydroquinate synthase family. Requires Co(2+) as cofactor. It depends on Zn(2+) as a cofactor. The cofactor is NAD(+).

The protein resides in the cytoplasm. The enzyme catalyses 7-phospho-2-dehydro-3-deoxy-D-arabino-heptonate = 3-dehydroquinate + phosphate. The protein operates within metabolic intermediate biosynthesis; chorismate biosynthesis; chorismate from D-erythrose 4-phosphate and phosphoenolpyruvate: step 2/7. Its function is as follows. Catalyzes the conversion of 3-deoxy-D-arabino-heptulosonate 7-phosphate (DAHP) to dehydroquinate (DHQ). The sequence is that of 3-dehydroquinate synthase from Rhodopseudomonas palustris (strain ATCC BAA-98 / CGA009).